A 460-amino-acid chain; its full sequence is WD repeat-containing protein 41 (460 aa).

WD repeat units follow at residues 40–79, 82–128, 131–168, 220–258, 321–359, and 403–441; these read EAHRDIVRFLVRLDDFRFASAGDDGIIVVWNAQTGEKLLE, GHTQ…QIQR, CFQSTVKCLTVLQRLDIWLSGGSDLGVWNRKLDLLCKT, DHQDNILSLANINDTGFVTGSHVGELLIWDALDWTVQAC, AHDSNILHIDKLPNRQLISCSEDGAVRMWEVREKQQLAA, and GHSSSVEMFLYFEDHGLVTCSADHLIILWKNGERESGVR.

In terms of assembly, component of the C9orf72-SMCR8 complex, at least composed of C9orf72, SMCR8 and WDR41. The complex is formed of two protomers, each individually consisting of one molecule each of C9orf72, SMCR8 and WDR41. The protomers homodimerize via an interaction between C9orf72 (via C-terminus) and SMCR8 (via N-terminus). Within each protomer SMCR8 (via DENN domain) acts as a bridging protein between WDR41 (via C-terminus and N-terminus) and C9orf72 (via C-terminus). The C9orf72-SMCR8 complex associates with the ULK1/ATG1 kinase complex.

The protein resides in the cytoplasm. Non-catalytic component of the C9orf72-SMCR8 complex, a complex that has guanine nucleotide exchange factor (GEF) activity and regulates autophagy. The C9orf72-SMCR8 complex promotes the exchange of GDP to GTP, converting inactive GDP-bound RAB8A and RAB39B into their active GTP-bound form, thereby promoting autophagosome maturation. As part of the C9orf72-SMCR8 complex, stimulates RAB8A and RAB11A GTPase activity in vitro, however WDR42 is shown not be an essential complex component for this function. The C9orf72-SMCR8 complex also acts as a negative regulator of autophagy initiation by interacting with the ULK1/ATG1 kinase complex and inhibiting its protein kinase activity. In Mus musculus (Mouse), this protein is WD repeat-containing protein 41.